Reading from the N-terminus, the 219-residue chain is Mediator of RNA polymerase II transcription subunit 18 (219 aa).

Belongs to the Mediator complex subunit 18 family. In terms of assembly, component of the Mediator complex. Interacts with YY1 to suppress disease susceptibility via the repression of genes glutaredoxins GRX480, GRXS13 and thioredoxin TRX-h5. Binds to ABI4 to regulate abscisic acid responses; recruited by ABI4 to ABI5 promoter in the presence of abscisic acid (ABA). Interacts with SUF4 to regulate flowering time; recruited by SUF4 to FLC promoter.

It is found in the nucleus. In terms of biological role, component of the Mediator complex, a coactivator involved in the regulated transcription of nearly all RNA polymerase II-dependent genes. Mediator functions as a bridge to convey information from gene-specific regulatory proteins to the basal RNA polymerase II transcription machinery. The Mediator complex, having a compact conformation in its free form, is recruited to promoters by direct interactions with regulatory proteins and serves for the assembly of a functional pre-initiation complex with RNA polymerase II and the general transcription factors. Involved in the regulation of histone H3 lysine tri-methylation (H3K36me3). Associates with the promoter, coding and terminator regions of target genes suggesting its function in transcription initiation, elongation and termination. Multifunctional protein which regulates plant immunity, especially during necrotrophic fungal infection (e.g. B.cinerea and A.brassicicola), flowering time and responses to hormones (e.g. abscisic acid ABA and ethylene) through interactions with distinct transcription factors. The polypeptide is Mediator of RNA polymerase II transcription subunit 18 (Arabidopsis thaliana (Mouse-ear cress)).